The following is a 480-amino-acid chain: MSSAFKAMRLHLTCPLPKQVINIPQTLFSYLITNQRAINNSCKPVKTSNAKKPKLPTTKLSWEERLSDTVTPLWRMTYEDQLQWKYEHQKKILLKMMKELSQDPTRAFSDHLNFPLLPIVASPVRDGYRNKSTFSVNKGIDGNPKTLGFYIGTGKAGNIVCVHADHLLSIPSKHKMVARCYEDFIRLSPLRPCILFDDGGHWREITIRTNSTGHTMAIVYFHPQSLTPEETDIHKAALVEYFTQGPGAICQLDSLYFQETTMTRCSHEQSQYQLLYGQTHIYEEVLGFKFRISPDSFFQVNREAAEALYKTVAELSQPCVGGTLLDVCCGTGAIGISLSPQMERVIGIELIEQAVEDAKFNAALNRVCNCEFLAGKAEVVLPDLMGSLSSDGGLTAVVNPSRAGLHYRVVRALRNHSAIRRLVYISCKPDGEAMRNFRELCCSVGLVRRITGEAFKPVVAVPVDLFPHTPHCELVLVFER.

S-adenosyl-L-methionine is bound by residues Gln299, Glu349, and Asn399. Cys427 acts as the Nucleophile in catalysis. The Proton acceptor role is filled by Glu473.

It belongs to the class I-like SAM-binding methyltransferase superfamily. RNA M5U methyltransferase family.

The protein localises to the mitochondrion. It catalyses the reaction uridine(54) in tRNA + S-adenosyl-L-methionine = 5-methyluridine(54) in tRNA + S-adenosyl-L-homocysteine + H(+). It carries out the reaction a uridine in 12S rRNA + S-adenosyl-L-methionine = a 5-methyluridine in 12S rRNA + S-adenosyl-L-homocysteine + H(+). Functionally, mitochondrial S-adenosyl-L-methionine-dependent methyltransferase that catalyzes the formation of 5-methyl-uridine in tRNAs and 12S rRNA. Catalyzes the methylation of uridine at position 54 (m5U54) in all tRNAs. Specifically methylates the uridine in position 429 of 12S rRNA (m5U429). Does not affect RNA stability or mitochondrial translation. This Danio rerio (Zebrafish) protein is tRNA (uracil-5-)-methyltransferase homolog B (trmt2b).